The primary structure comprises 255 residues: Imidazole glycerol phosphate synthase subunit HisF (255 aa).

Residues aspartate 11 and aspartate 130 contribute to the active site.

This sequence belongs to the HisA/HisF family. Heterodimer of HisH and HisF.

The protein localises to the cytoplasm. It catalyses the reaction 5-[(5-phospho-1-deoxy-D-ribulos-1-ylimino)methylamino]-1-(5-phospho-beta-D-ribosyl)imidazole-4-carboxamide + L-glutamine = D-erythro-1-(imidazol-4-yl)glycerol 3-phosphate + 5-amino-1-(5-phospho-beta-D-ribosyl)imidazole-4-carboxamide + L-glutamate + H(+). The protein operates within amino-acid biosynthesis; L-histidine biosynthesis; L-histidine from 5-phospho-alpha-D-ribose 1-diphosphate: step 5/9. In terms of biological role, IGPS catalyzes the conversion of PRFAR and glutamine to IGP, AICAR and glutamate. The HisF subunit catalyzes the cyclization activity that produces IGP and AICAR from PRFAR using the ammonia provided by the HisH subunit. The polypeptide is Imidazole glycerol phosphate synthase subunit HisF (Campylobacter jejuni (strain RM1221)).